We begin with the raw amino-acid sequence, 416 residues long: Phosphoglycerate kinase (416 aa).

Residues 28 to 30, R44, 65 to 68, R122, and R162 each bind substrate; these read DMN and HQSR. Residues E337 and 362-365 contribute to the ATP site; that span reads GGHI.

Belongs to the phosphoglycerate kinase family. Monomer.

Its subcellular location is the cytoplasm. The catalysed reaction is (2R)-3-phosphoglycerate + ATP = (2R)-3-phospho-glyceroyl phosphate + ADP. Its pathway is carbohydrate degradation; glycolysis; pyruvate from D-glyceraldehyde 3-phosphate: step 2/5. In Methanosarcina mazei (strain ATCC BAA-159 / DSM 3647 / Goe1 / Go1 / JCM 11833 / OCM 88) (Methanosarcina frisia), this protein is Phosphoglycerate kinase.